The chain runs to 140 residues: Low calcium response locus protein T (140 aa).

This is Low calcium response locus protein T (lcrT) from Yersinia pestis.